A 464-amino-acid chain; its full sequence is ATP synthase subunit beta 2 (464 aa).

Residue 147–154 (GGAGVGKT) coordinates ATP.

Belongs to the ATPase alpha/beta chains family. In terms of assembly, F-type ATPases have 2 components, CF(1) - the catalytic core - and CF(0) - the membrane proton channel. CF(1) has five subunits: alpha(3), beta(3), gamma(1), delta(1), epsilon(1). CF(0) has four main subunits: a(1), b(1), b'(1) and c(9-12).

It localises to the cell inner membrane. It carries out the reaction ATP + H2O + 4 H(+)(in) = ADP + phosphate + 5 H(+)(out). Produces ATP from ADP in the presence of a proton gradient across the membrane. The catalytic sites are hosted primarily by the beta subunits. The chain is ATP synthase subunit beta 2 from Cereibacter sphaeroides (strain ATCC 17023 / DSM 158 / JCM 6121 / CCUG 31486 / LMG 2827 / NBRC 12203 / NCIMB 8253 / ATH 2.4.1.) (Rhodobacter sphaeroides).